The sequence spans 490 residues: Cytochrome P450 2C54 (490 aa).

A Phosphoserine modification is found at Ser127. Lys252 and Lys375 each carry N6-acetyllysine. Cys435 contacts heme.

The protein belongs to the cytochrome P450 family. The cofactor is heme. As to expression, expressed in liver.

Its subcellular location is the endoplasmic reticulum membrane. It localises to the microsome membrane. The catalysed reaction is an organic molecule + reduced [NADPH--hemoprotein reductase] + O2 = an alcohol + oxidized [NADPH--hemoprotein reductase] + H2O + H(+). Metabolizes arachidonic acid mainly to 12-hydroxyeicosatetraenoic acid (HETE). The protein is Cytochrome P450 2C54 of Mus musculus (Mouse).